Consider the following 196-residue polypeptide: MPIGVPKVPFRSPGEGDTSWVDIYNRLYRERLFFLGQEVDTEISNQLISLMIYLSIEKDTKDLYLFINSPGGWVISGMAIYDTMQFVRPDVQTICMGLAASIASFILVGGAITKRIAFPHARVMIHQPASSFYEAQTGEFILEAEELLKLRETITRVYVQRTGKPIWVVSEDMERDVFMSATEAQAHGIVDLVAVQ.

Catalysis depends on serine 101, which acts as the Nucleophile. The active site involves histidine 126.

This sequence belongs to the peptidase S14 family. Component of the chloroplastic Clp protease core complex.

Its subcellular location is the plastid. The protein resides in the chloroplast stroma. It carries out the reaction Hydrolysis of proteins to small peptides in the presence of ATP and magnesium. alpha-casein is the usual test substrate. In the absence of ATP, only oligopeptides shorter than five residues are hydrolyzed (such as succinyl-Leu-Tyr-|-NHMec, and Leu-Tyr-Leu-|-Tyr-Trp, in which cleavage of the -Tyr-|-Leu- and -Tyr-|-Trp bonds also occurs).. Cleaves peptides in various proteins in a process that requires ATP hydrolysis. Has a chymotrypsin-like activity. Plays a major role in the degradation of misfolded proteins. In Barbarea verna (Land cress), this protein is ATP-dependent Clp protease proteolytic subunit.